A 420-amino-acid polypeptide reads, in one-letter code: UDP-N-acetylglucosamine 1-carboxyvinyltransferase (420 aa).

Lysine 22–asparagine 23 provides a ligand contact to phosphoenolpyruvate. Residue arginine 91 coordinates UDP-N-acetyl-alpha-D-glucosamine. Residue cysteine 115 is the Proton donor of the active site. Cysteine 115 is subject to 2-(S-cysteinyl)pyruvic acid O-phosphothioketal. UDP-N-acetyl-alpha-D-glucosamine is bound by residues arginine 120 to leucine 124, lysine 160 to valine 163, aspartate 305, and isoleucine 327.

It belongs to the EPSP synthase family. MurA subfamily.

The protein localises to the cytoplasm. The enzyme catalyses phosphoenolpyruvate + UDP-N-acetyl-alpha-D-glucosamine = UDP-N-acetyl-3-O-(1-carboxyvinyl)-alpha-D-glucosamine + phosphate. Its pathway is cell wall biogenesis; peptidoglycan biosynthesis. Functionally, cell wall formation. Adds enolpyruvyl to UDP-N-acetylglucosamine. The chain is UDP-N-acetylglucosamine 1-carboxyvinyltransferase from Proteus mirabilis (strain HI4320).